The chain runs to 507 residues: Cytochrome c-type protein ImcH (507 aa).

Helical transmembrane passes span 14–34 (ISLI…AFIA), 45–65 (YIGL…LILV), and 100–120 (LFIF…VASI). Heme contacts are provided by cysteine 132, cysteine 136, methionine 140, histidine 152, cysteine 157, cysteine 160, histidine 161, aspartate 400, cysteine 449, cysteine 452, histidine 453, cysteine 487, cysteine 490, histidine 491, and glutamate 496.

It belongs to the NapC/NirT/NrfH family. Post-translationally, binds 4 heme c groups covalently per subunit.

The protein resides in the cell inner membrane. Functionally, redox protein involved in a high-potential metal respiratory pathway. Is required only for electron transfer to terminal extracellular electron acceptors with redox potentials higher than -0.1 V. ImcH likely transfers electrons from the quinone pool to a periplasmic acceptor. This chain is Cytochrome c-type protein ImcH, found in Geobacter sulfurreducens (strain ATCC 51573 / DSM 12127 / PCA).